Here is a 200-residue protein sequence, read N- to C-terminus: Pyridoxal phosphate homeostasis protein (200 aa).

The residue at position 11 (lysine 11) is an N6-(pyridoxal phosphate)lysine.

The protein belongs to the pyridoxal phosphate-binding protein YggS/PROSC family. As to quaternary structure, monomer.

Its function is as follows. Pyridoxal 5'-phosphate (PLP)-binding protein, which is involved in PLP homeostasis. The protein is Pyridoxal phosphate homeostasis protein of Buchnera aphidicola subsp. Acyrthosiphon pisum (strain APS) (Acyrthosiphon pisum symbiotic bacterium).